A 180-amino-acid chain; its full sequence is Beta-lactoglobulin-1/B (180 aa).

The signal sequence occupies residues 1-18; it reads MKCLLLALGLALACGVQA. 3 disulfides stabilise this stretch: Cys-84-Cys-178, Cys-124-Cys-137, and Cys-124-Cys-139.

It belongs to the calycin superfamily. Lipocalin family. As to quaternary structure, under physiological conditions beta-lactoglobulin exists as an equilibrium mixture of monomeric and dimeric forms. Alternate disulfide bonds occur in equal amounts.

Its subcellular location is the secreted. Functionally, lactoglobulin is the primary component of whey, it binds retinol and is probably involved in the transport of that molecule. The protein is Beta-lactoglobulin-1/B of Ovis aries (Sheep).